The primary structure comprises 482 residues: Islet cell autoantigen 1-like protein (482 aa).

Positions 44 to 247 (ASDAELDAKL…TARMMSQIHE (204 aa)) constitute an AH domain. Disordered stretches follow at residues 365–393 (TQECQTAFGSPSASLTSQEPSMGSEPLAH) and 427–449 (SHTDNQPVPSQSPKKLTRSPNNG). Composition is skewed to polar residues over residues 366 to 385 (QECQTAFGSPSASLTSQEPS) and 428 to 449 (HTDNQPVPSQSPKKLTRSPNNG).

The chain is Islet cell autoantigen 1-like protein (ICA1L) from Homo sapiens (Human).